The following is a 449-amino-acid chain: GPI mannosyltransferase 2 (449 aa).

The Cytoplasmic segment spans residues 1–7 (MTEKVTK). A helical membrane pass occupies residues 8–28 (LALASRLIVLLVQLVANGALP). At 29 to 82 (EHKPDVFRMPVSSDQNASWIDKVIKRCLGGLRHWDGEYFLHIAENLYSYENTLA) the chain is on the lumenal side. Asn-44 is a glycosylation site (N-linked (GlcNAc...) asparagine). The chain crosses the membrane as a helical span at residues 83–103 (FYPLYPVVVRHVGQAVEAIGI). Residues 104–109 (SLSQES) lie on the Cytoplasmic side of the membrane. Residues 110–130 (ILLVVAVALNFWLFCESANLL) traverse the membrane as a helical segment. The Lumenal portion of the chain corresponds to 131-148 (FQLTQVLFNDLNKSWNAA). Residue Asn-142 is glycosylated (N-linked (GlcNAc...) asparagine). A helical transmembrane segment spans residues 149–169 (LIYCFNPATIFFTAAYSETFF). Residues 170–196 (AYSSLHLMLECSKPTGSFRYLRLGTAL) lie on the Cytoplasmic side of the membrane. The helical transmembrane segment at 197-217 (AACLLCRSNGLITLGYPLYFF) threads the bilayer. Residues 218–235 (GRQLLLKNKEPNTCMQLT) are Lumenal-facing. The helical transmembrane segment at 236-256 (QMTLTILGAIGILHTYYFYIY) threads the bilayer. Residues 257–368 (RLYCLPNTRP…GFKELIRDHT (112 aa)) are Cytoplasmic-facing. The chain crosses the membrane as a helical span at residues 369-389 (TFPFVLHAAILTLVCTVYVHI). Over 390–423 (QVSTRLLASATPVFYWFAADHMPKTLAQLKLRSK) the chain is Lumenal. Residues 424–444 (AGALFVWCTTYSLVGTVLFSN) form a helical membrane-spanning segment. Residues 445 to 449 (NYPWT) are Cytoplasmic-facing.

Belongs to the PIGV family.

Its subcellular location is the endoplasmic reticulum membrane. Its pathway is glycolipid biosynthesis; glycosylphosphatidylinositol-anchor biosynthesis. Functionally, mannosyltransferase involved in glycosylphosphatidylinositol-anchor biosynthesis. Transfers the second mannose to the glycosylphosphatidylinositol during GPI precursor assembly. Required for the GPI-mediated endoplasmic reticulum exit and proper targeting to the cell surface of chp. Required for GPI-mediated membrane attachment of chp, qsm and Cont. Essential for microvillar stability in the rhabdomere. This is GPI mannosyltransferase 2 from Drosophila melanogaster (Fruit fly).